Here is a 108-residue protein sequence, read N- to C-terminus: uncharacterized protein (108 aa).

This is an uncharacterized protein from Acidianus sp. F28 (AFV-2).